Reading from the N-terminus, the 36-residue chain is F420-dependent NADP reductase (36 aa).

Residue 9-12 (TGNI) coordinates NADP(+).

The protein belongs to the F420-dependent NADP reductase family. As to quaternary structure, homotetramer.

The catalysed reaction is reduced coenzyme F420-(gamma-L-Glu)(n) + NADP(+) = oxidized coenzyme F420-(gamma-L-Glu)(n) + NADPH + 2 H(+). In terms of biological role, catalyzes the reduction of NADP(+) with F420H(2) via hydride transfer, and the reverse reaction, i.e. the reduction of F420 with NADPH. In M.organophilum, an alcohol-fermenting methanogen containing an NADP-dependent alcohol dehydrogenase, is probably involved in the regeneration of F420H(2) required for CO(2) reduction to methane. Thus, during growth on alcohol and CO(2), the F420-dependent NADP reductase probably has the function of coupling the NADP-dependent oxidation of the alcohol to the aldehyde with the F420-dependent reduction of CO(2) to methane. In Methanogenium organophilum, this protein is F420-dependent NADP reductase (fno).